We begin with the raw amino-acid sequence, 143 residues long: FAM161 homolog famh-136 (143 aa).

The protein belongs to the FAM136 family.

The protein localises to the cytoplasm. In terms of biological role, may play a role in locomotion and behavior. This is FAM161 homolog famh-136 from Caenorhabditis elegans.